We begin with the raw amino-acid sequence, 335 residues long: Holliday junction branch migration complex subunit RuvB (335 aa).

A large ATPase domain (RuvB-L) region spans residues 4 to 184; sequence ADRIISGQAK…FGIVQRLEFY (181 aa). ATP-binding positions include Ile-23, Arg-24, Gly-65, Lys-68, Thr-69, Thr-70, 131-133, Arg-174, Tyr-184, and Arg-221; that span reads EDY. Thr-69 is a binding site for Mg(2+). The segment at 185–255 is small ATPAse domain (RuvB-S); it reads SVEDLTSIVA…VAKQALSMLD (71 aa). The segment at 258 to 335 is head domain (RuvB-H); sequence DAGFDYLDRK…RHFGLQKLSD (78 aa). Residues Arg-294, Arg-313, and Arg-318 each contribute to the DNA site.

The protein belongs to the RuvB family. In terms of assembly, homohexamer. Forms an RuvA(8)-RuvB(12)-Holliday junction (HJ) complex. HJ DNA is sandwiched between 2 RuvA tetramers; dsDNA enters through RuvA and exits via RuvB. An RuvB hexamer assembles on each DNA strand where it exits the tetramer. Each RuvB hexamer is contacted by two RuvA subunits (via domain III) on 2 adjacent RuvB subunits; this complex drives branch migration. In the full resolvosome a probable DNA-RuvA(4)-RuvB(12)-RuvC(2) complex forms which resolves the HJ.

The protein resides in the cytoplasm. The enzyme catalyses ATP + H2O = ADP + phosphate + H(+). Its function is as follows. The RuvA-RuvB-RuvC complex processes Holliday junction (HJ) DNA during genetic recombination and DNA repair, while the RuvA-RuvB complex plays an important role in the rescue of blocked DNA replication forks via replication fork reversal (RFR). RuvA specifically binds to HJ cruciform DNA, conferring on it an open structure. The RuvB hexamer acts as an ATP-dependent pump, pulling dsDNA into and through the RuvAB complex. RuvB forms 2 homohexamers on either side of HJ DNA bound by 1 or 2 RuvA tetramers; 4 subunits per hexamer contact DNA at a time. Coordinated motions by a converter formed by DNA-disengaged RuvB subunits stimulates ATP hydrolysis and nucleotide exchange. Immobilization of the converter enables RuvB to convert the ATP-contained energy into a lever motion, pulling 2 nucleotides of DNA out of the RuvA tetramer per ATP hydrolyzed, thus driving DNA branch migration. The RuvB motors rotate together with the DNA substrate, which together with the progressing nucleotide cycle form the mechanistic basis for DNA recombination by continuous HJ branch migration. Branch migration allows RuvC to scan DNA until it finds its consensus sequence, where it cleaves and resolves cruciform DNA. In Haemophilus influenzae (strain PittEE), this protein is Holliday junction branch migration complex subunit RuvB.